The chain runs to 130 residues: Small ribosomal subunit protein uS11 (130 aa).

The protein belongs to the universal ribosomal protein uS11 family. In terms of assembly, part of the 30S ribosomal subunit. Interacts with proteins S7 and S18. Binds to IF-3.

Located on the platform of the 30S subunit, it bridges several disparate RNA helices of the 16S rRNA. Forms part of the Shine-Dalgarno cleft in the 70S ribosome. This Xylella fastidiosa (strain M23) protein is Small ribosomal subunit protein uS11.